A 71-amino-acid polypeptide reads, in one-letter code: Plasticin-C2 (71 aa).

The first 22 residues, 1-22 (MAFLKKSLLLVLFLALVPLSIC), serve as a signal peptide directing secretion. Residues 23–45 (EEEKREEEDEEKQEDDDQSENKR) constitute a propeptide that is removed on maturation. Positions 25-46 (EKREEEDEEKQEDDDQSENKRG) are disordered. Residues 26-40 (KREEEDEEKQEDDDQ) show a composition bias toward acidic residues. Asn-68 is subject to Asparagine amide. A propeptide spanning residues 70 to 71 (ES) is cleaved from the precursor.

The protein belongs to the frog skin active peptide (FSAP) family. Plasticin subfamily. As to expression, expressed by the skin glands.

The protein resides in the secreted. It localises to the target cell membrane. Neutral peptide with no antimicrobial activity. May act in synergy with cationic peptides by enhancing their activity. Has a moderate hemolytic activity. This chain is Plasticin-C2, found in Agalychnis callidryas (Red-eyed tree frog).